The sequence spans 464 residues: Glutamate--tRNA ligase (464 aa).

The 'HIGH' region motif lies at 9–19; sequence PSPTGYLHIGG. The short motif at 242–246 is the 'KMSKS' region element; that stretch reads KISKR. Residue Lys-245 participates in ATP binding.

It belongs to the class-I aminoacyl-tRNA synthetase family. Glutamate--tRNA ligase type 1 subfamily. In terms of assembly, monomer.

The protein localises to the cytoplasm. It carries out the reaction tRNA(Glu) + L-glutamate + ATP = L-glutamyl-tRNA(Glu) + AMP + diphosphate. Its function is as follows. Catalyzes the attachment of glutamate to tRNA(Glu) in a two-step reaction: glutamate is first activated by ATP to form Glu-AMP and then transferred to the acceptor end of tRNA(Glu). The sequence is that of Glutamate--tRNA ligase from Neisseria gonorrhoeae (strain NCCP11945).